The following is a 369-amino-acid chain: MVALLGAGAISLVFTLFLTPLFIKLFHRLQWGQFIRDDGPQSHHTKRGTATMGGIVIILASVIGYFAGHLLTWDGIRFDPVTPSGLLVVFMMVGLGFVGFLDDYLKTRKQQSLGLGGWQKIAGQVIVATVFAVLAITLRDPVSGLTPASTAISLFRDLPLDFMALGAVIGTGLFIVWICLIVASASNGVNVADGLDGLAAGASIFSIGSYVIIGFWQFNQSCDSVSSYQNEYRCYEVASPLDLAIIAASIVGALIGFLWWNTSPAQIFMGDTGSLGLGGALAALAILSRTELLLVFIGGLFVIVAGSVVLQRAYFKITKGKRIFLMSPLHHHFELKGWAEVTVVVRFWIIAGLLVAAGVGTFYLEWITQ.

10 consecutive transmembrane segments (helical) span residues 3-23 (ALLGAGAISLVFTLFLTPLFI), 53-73 (GGIVIILASVIGYFAGHLLTW), 81-101 (VTPSGLLVVFMMVGLGFVGFL), 118-138 (WQKIAGQVIVATVFAVLAITL), 162-182 (FMALGAVIGTGLFIVWICLIV), 198-218 (LAAGASIFSIGSYVIIGFWQF), 240-260 (PLDLAIIAASIVGALIGFLWW), 267-287 (IFMGDTGSLGLGGALAALAIL), 290-310 (TELLLVFIGGLFVIVAGSVVL), and 347-367 (FWIIAGLLVAAGVGTFYLEWI).

Belongs to the glycosyltransferase 4 family. MraY subfamily. Mg(2+) serves as cofactor.

The protein resides in the cell membrane. The catalysed reaction is UDP-N-acetyl-alpha-D-muramoyl-L-alanyl-gamma-D-glutamyl-meso-2,6-diaminopimeloyl-D-alanyl-D-alanine + di-trans,octa-cis-undecaprenyl phosphate = di-trans,octa-cis-undecaprenyl diphospho-N-acetyl-alpha-D-muramoyl-L-alanyl-D-glutamyl-meso-2,6-diaminopimeloyl-D-alanyl-D-alanine + UMP. Its pathway is cell wall biogenesis; peptidoglycan biosynthesis. Catalyzes the initial step of the lipid cycle reactions in the biosynthesis of the cell wall peptidoglycan: transfers peptidoglycan precursor phospho-MurNAc-pentapeptide from UDP-MurNAc-pentapeptide onto the lipid carrier undecaprenyl phosphate, yielding undecaprenyl-pyrophosphoryl-MurNAc-pentapeptide, known as lipid I. This chain is Phospho-N-acetylmuramoyl-pentapeptide-transferase, found in Clavibacter sepedonicus (Clavibacter michiganensis subsp. sepedonicus).